The following is a 430-amino-acid chain: Cytochrome c biogenesis protein CcsB (430 aa).

The next 3 membrane-spanning stretches (helical) occupy residues 14–34 (LRLA…GTIL), 72–92 (SVWF…CSWR), and 162–182 (VGPL…AWGA).

This sequence belongs to the Ccs1/CcsB family. In terms of assembly, may interact with CcsA.

Its subcellular location is the cellular thylakoid membrane. Required during biogenesis of c-type cytochromes (cytochrome c6 and cytochrome f) at the step of heme attachment. The protein is Cytochrome c biogenesis protein CcsB of Synechococcus sp. (strain WH7803).